Reading from the N-terminus, the 314-residue chain is Probable phytol kinase 1, chloroplastic (314 aa).

Residues 1 to 62 (MAAAARPVDV…GVGAAAAPAV (62 aa)) constitute a chloroplast transit peptide. Transmembrane regions (helical) follow at residues 72-91 (AALR…YSLV), 111-131 (IVHV…SNST), 135-155 (FFAA…GLRL), 181-201 (YVIV…IGIV), 234-254 (IGSI…LFYF), 266-286 (LALG…CIPV), and 294-314 (ISVP…SSCC).

It belongs to the polyprenol kinase family.

Its subcellular location is the plastid. The protein localises to the chloroplast membrane. The catalysed reaction is phytol + CTP = phytyl phosphate + CDP + H(+). It functions in the pathway cofactor biosynthesis; tocopherol biosynthesis. In terms of biological role, involved in the activation and reutilization of phytol from chlorophyll degradation in plant metabolism, including tocopherol biosynthesis. Catalyzes the conversion of phytol to phytol monophosphate (PMP). This Oryza sativa subsp. japonica (Rice) protein is Probable phytol kinase 1, chloroplastic.